The primary structure comprises 100 residues: Small ribosomal subunit protein uS14c (100 aa).

It belongs to the universal ribosomal protein uS14 family. As to quaternary structure, part of the 30S ribosomal subunit.

The protein resides in the plastid. It localises to the chloroplast. Binds 16S rRNA, required for the assembly of 30S particles. The sequence is that of Small ribosomal subunit protein uS14c from Lotus japonicus (Lotus corniculatus var. japonicus).